A 103-amino-acid polypeptide reads, in one-letter code: Acylphosphatase-2 (103 aa).

The Acylphosphatase-like domain maps to 13 to 103; the sequence is SVDYEVFGRV…LQYNGFSTRY (91 aa). Residues R28 and N46 contribute to the active site.

This sequence belongs to the acylphosphatase family.

It carries out the reaction an acyl phosphate + H2O = a carboxylate + phosphate + H(+). The polypeptide is Acylphosphatase-2 (acyp2) (Xenopus tropicalis (Western clawed frog)).